The sequence spans 413 residues: Multidrug resistance protein MdtA (413 aa).

An N-terminal signal peptide occupies residues 1-25; the sequence is MKNKRRTYFFQFAVLAVVIATAYFA. The interval 394 to 413 is disordered; that stretch reads ANTYDQMDKSKPSNSKVENT.

It belongs to the membrane fusion protein (MFP) (TC 8.A.1) family. In terms of assembly, part of a tripartite efflux system composed of MdtA, MdtB and MdtC.

It is found in the cell inner membrane. This chain is Multidrug resistance protein MdtA, found in Xenorhabdus bovienii (strain SS-2004) (Xenorhabdus nematophila subsp. bovienii).